The primary structure comprises 30 residues: GIPCGESCVWIPCISAALGCSCKNKVCYRN.

Positions 1–30 (GIPCGESCVWIPCISAALGCSCKNKVCYRN) form a cross-link, cyclopeptide (Gly-Asn). 3 disulfide bridges follow: Cys4–Cys20, Cys8–Cys22, and Cys13–Cys27.

This is a cyclic peptide. As to expression, expressed in fruit, pedicel, root and stem but not in leaf (at protein level).

In terms of biological role, probably participates in a plant defense mechanism. The polypeptide is Circulin A (Chassalia chartacea (Chassalia curviflora)).